The chain runs to 193 residues: Segregation and condensation protein B (193 aa).

The protein belongs to the ScpB family. Homodimer. Homodimerization may be required to stabilize the binding of ScpA to the Smc head domains. Component of a cohesin-like complex composed of ScpA, ScpB and the Smc homodimer, in which ScpA and ScpB bind to the head domain of Smc. The presence of the three proteins is required for the association of the complex with DNA.

Its subcellular location is the cytoplasm. In terms of biological role, participates in chromosomal partition during cell division. May act via the formation of a condensin-like complex containing Smc and ScpA that pull DNA away from mid-cell into both cell halves. The polypeptide is Segregation and condensation protein B (Clostridium botulinum (strain ATCC 19397 / Type A)).